The chain runs to 449 residues: Dynein regulatory complex protein 10 (449 aa).

Positions A90–G125 form a coiled coil. In terms of domain architecture, IQ spans M400–G429. Residues S422–K449 are disordered. Basic and acidic residues predominate over residues K430–K449.

It belongs to the DRC10 family. Component of the nexin-dynein regulatory complex (N-DRC). Interacts with CFAP52.

It localises to the cytoplasm. Its subcellular location is the cytoskeleton. It is found in the flagellum axoneme. In terms of biological role, component of the nexin-dynein regulatory complex (N-DRC), a key regulator of ciliary/flagellar motility which maintains the alignment and integrity of the distal axoneme and regulates microtubule sliding in motile axonemes. In Homo sapiens (Human), this protein is Dynein regulatory complex protein 10 (IQCD).